The chain runs to 147 residues: MVHLTAEEKSSVTSLWGKMNVDEAGGEALGRLLVVYPWTQRFFDNFGNLSSSSAIMGNPKVKAHGKKVLTSFGDAIKNMDNLKGAFAKLSELHCDKLHVDPENFRLLGNVLVIILVTHFGKDFTPEVQVAWQKLVSGVATALAHKYH.

In terms of domain architecture, Globin spans 3–147; sequence HLTAEEKSSV…VATALAHKYH (145 aa). Phosphoserine is present on residues serine 14 and serine 51. Residues histidine 64 and histidine 93 each contribute to the heme b site.

The protein belongs to the globin family. In terms of assembly, heterotetramer of two alpha chains and two epsilon chains in early embryonic hemoglobin Gower-2; two zeta chains and two epsilon chains in early embryonic hemoglobin Gower-1. As to expression, red blood cells.

Functionally, the epsilon chain is a beta-type chain of early mammalian embryonic hemoglobin. This is Hemoglobin subunit epsilon (HBE1) from Carlito syrichta (Philippine tarsier).